A 496-amino-acid chain; its full sequence is Hexokinase-2 (496 aa).

A helical transmembrane segment spans residues 4 to 24; it reads ATVGAVVVGTAAAVAVAALIM. Residues 35 to 487 enclose the Hexokinase domain; it reads ARARAILKEF…SGIGAALLAA (453 aa). Residues 90–228 are hexokinase small subdomain; that stretch reads TGDEGGVFYA…EIDMRVSALV (139 aa). Residues G104, T105, and N106 each coordinate ADP. The D-glucose site is built by T194, K195, N229, and D230. A hexokinase large subdomain region spans residues 229 to 476; that stretch reads NDTVGTLAGG…TSIVFKHAND (248 aa). Residue T253 participates in ADP binding. D-glucose-binding residues include N256, E284, and E315. G441 serves as a coordination point for ADP.

The protein belongs to the hexokinase family.

Its subcellular location is the plastid. It localises to the chloroplast outer membrane. The catalysed reaction is a D-hexose + ATP = a D-hexose 6-phosphate + ADP + H(+). It carries out the reaction D-fructose + ATP = D-fructose 6-phosphate + ADP + H(+). It catalyses the reaction D-glucose + ATP = D-glucose 6-phosphate + ADP + H(+). Its pathway is carbohydrate metabolism; hexose metabolism. It functions in the pathway carbohydrate degradation; glycolysis; D-glyceraldehyde 3-phosphate and glycerone phosphate from D-glucose: step 1/4. In terms of biological role, fructose and glucose phosphorylating enzyme. May be involved in the phosphorylation of glucose during the export from plastids to cytosol. Seems neither to be involved in cell sugar sensing nor in carbohydrate metabolism in tuber. The polypeptide is Hexokinase-2 (HXK2) (Solanum tuberosum (Potato)).